A 453-amino-acid polypeptide reads, in one-letter code: Glutamyl-tRNA(Gln) amidotransferase subunit A (453 aa).

Active-site charge relay system residues include lysine 56 and serine 131. Serine 155 acts as the Acyl-ester intermediate in catalysis.

This sequence belongs to the amidase family. GatA subfamily. As to quaternary structure, heterotrimer of A, B and C subunits.

It carries out the reaction L-glutamyl-tRNA(Gln) + L-glutamine + ATP + H2O = L-glutaminyl-tRNA(Gln) + L-glutamate + ADP + phosphate + H(+). Allows the formation of correctly charged Gln-tRNA(Gln) through the transamidation of misacylated Glu-tRNA(Gln) in organisms which lack glutaminyl-tRNA synthetase. The reaction takes place in the presence of glutamine and ATP through an activated gamma-phospho-Glu-tRNA(Gln). This chain is Glutamyl-tRNA(Gln) amidotransferase subunit A, found in Campylobacter jejuni subsp. doylei (strain ATCC BAA-1458 / RM4099 / 269.97).